The following is a 341-amino-acid chain: NADH-quinone oxidoreductase subunit H 2 (341 aa).

Helical transmembrane passes span 13–33, 82–102, 115–135, 161–181, 190–210, 242–262, 277–297, and 317–337; these read IVVI…IAYI, GVFL…WAVI, VGVL…IMAG, IGFV…TAIV, VLGW…VSAL, LFVL…TILF, WVPG…MFAM, and VFLP…QFAG.

The protein belongs to the complex I subunit 1 family. NDH-1 is composed of 14 different subunits. Subunits NuoA, H, J, K, L, M, N constitute the membrane sector of the complex.

The protein resides in the cell inner membrane. The catalysed reaction is a quinone + NADH + 5 H(+)(in) = a quinol + NAD(+) + 4 H(+)(out). In terms of biological role, NDH-1 shuttles electrons from NADH, via FMN and iron-sulfur (Fe-S) centers, to quinones in the respiratory chain. The immediate electron acceptor for the enzyme in this species is believed to be ubiquinone. Couples the redox reaction to proton translocation (for every two electrons transferred, four hydrogen ions are translocated across the cytoplasmic membrane), and thus conserves the redox energy in a proton gradient. This subunit may bind ubiquinone. This is NADH-quinone oxidoreductase subunit H 2 from Rhodopseudomonas palustris (strain HaA2).